The following is a 143-amino-acid chain: Mini-ribonuclease 3 (143 aa).

Aspartate 35 is a catalytic residue.

This sequence belongs to the MrnC RNase family. Homodimer. Mg(2+) serves as cofactor.

The protein resides in the cytoplasm. Involved in correct processing of both the 5' and 3' ends of 23S rRNA precursor. Processes 30S rRNA precursor transcript even in absence of ribonuclease 3 (Rnc); Rnc processes 30S rRNA into smaller rRNA precursors. This chain is Mini-ribonuclease 3, found in Synechocystis sp. (strain ATCC 27184 / PCC 6803 / Kazusa).